A 364-amino-acid polypeptide reads, in one-letter code: MDQDRSGAADAGNPDPGRGPAGSAEARNGAAAASSPAEWAGQLRLSVAERNGRSYAARQFHEGALRVLRPHYLDRSGQVTYTVVNPGGAYLGADAYLLDVAVERDASLVLTTQSATKVYRTPQGPATQDMTVRLGPGSCLEHVPDQLIVYRGGSYLQRTRVDMDPAASLLLAEVVTPGWSPSGESFAYDELRLRTEVRVTPPEVPAPAAPDRGAPAAEAQDRPADPCHVPGGPDRAASSGGTGAAPAGERARRLVVDQLRIRPDAHGGMSGVGFMEGFSHTGQLLVADARLDDELYERLCELVDASGTHSGITRAGTGEPYGVRCVCVRSLAHSTSAITALHRAVVDELRQRWRGQSPLRLRKY.

Disordered regions lie at residues 1 to 37 and 201 to 250; these read MDQD…SSPA and PPEV…AGER. Low complexity-rich tracts occupy residues 21–37, 209–218, and 236–248; these read AGSA…SSPA, APDRGAPAAE, and AASS…APAG.

This sequence belongs to the UreD family. As to quaternary structure, ureD, UreF and UreG form a complex that acts as a GTP-hydrolysis-dependent molecular chaperone, activating the urease apoprotein by helping to assemble the nickel containing metallocenter of UreC. The UreE protein probably delivers the nickel.

The protein localises to the cytoplasm. Functionally, required for maturation of urease via the functional incorporation of the urease nickel metallocenter. The protein is Urease accessory protein UreD of Kocuria rhizophila (strain ATCC 9341 / DSM 348 / NBRC 103217 / DC2201).